The primary structure comprises 328 residues: Olfactory receptor 4A16 (328 aa).

At 1–23 (MRPSSNVTEFVLLGLTQDPDVKK) the chain is on the extracellular side. N6 is a glycosylation site (N-linked (GlcNAc...) asparagine). A helical transmembrane segment spans residues 24–47 (TLFVMFLLIYIVTMVGNLLIWVTT). Topologically, residues 48–55 (IGSPSLGS) are cytoplasmic. The chain crosses the membrane as a helical span at residues 56–77 (LMYFFLAYLSLMDAIYSTAMSP). Residues 78–98 (KLMIDLLCDKIAISLSACMGQ) lie on the Extracellular side of the membrane. Residues C95 and C187 are joined by a disulfide bond. A helical transmembrane segment spans residues 99 to 118 (LFIEHLLGGAEVFLLVVMAY). Topologically, residues 119 to 137 (DRYVAISKPLHYLNIMNRL) are cytoplasmic. Residues 138–156 (VCILLLVVAMIGGFVHSVV) traverse the membrane as a helical segment. Residues 157-193 (QIVFLYSLPICGPNVIDHSVCDMYPLLELLCLDTYFI) are Extracellular-facing. A helical transmembrane segment spans residues 194-217 (GLTVVANGGIICMVIFTFLLISCG). The Cytoplasmic segment spans residues 218-233 (VILNFLKTYSQEERHK). A helical transmembrane segment spans residues 234–256 (ALPTCISHIIVVALVFVPCIFMY). Over 257 to 267 (VRPVSNFPFDK) the chain is Extracellular. Residues 268-287 (LMTVFYSIITLMLNPLIYSL) form a helical membrane-spanning segment. At 288–328 (RQSEMKNAMKNLWCEKLSIVRKRVSPTLNIFIPSSKATNRR) the chain is on the cytoplasmic side.

It belongs to the G-protein coupled receptor 1 family.

The protein localises to the cell membrane. Its function is as follows. Odorant receptor. The protein is Olfactory receptor 4A16 (OR4A16) of Homo sapiens (Human).